A 359-amino-acid chain; its full sequence is RuBisCO accumulation factor 1 (359 aa).

The N-terminal alpha-helix stretch occupies residues 12–195 (LSPEETDALF…RQKIEQLLSD (184 aa)). The tract at residues 219–345 (PLLIPVAGSL…VLLVMRPKKI (127 aa)) is C-terminal beta-sheet.

The protein belongs to the RAF family. As to quaternary structure, homodimer. Forms an RbcL(8)-Raf1(8) complex. Forms complexes of many stoichiometries with RbcL with and without RbcS. RbcX and Raf1 can bind simultaneously to RbcL.

It is found in the cytoplasm. A major RuBisCO chaperone. Acts after GroEL-GroES chaperonin to fold and/or assemble the large subunit of RuBisCO (ccbL, rbcL). Cooperates with RbcX in RbcL folding, plays the major role in assembly of dimers into RbcL(8)-Raf1(8) intermediate complexes. RbcS replaces Raf1, leading to holoenzyme formation. In terms of biological role, raf1 and RbcX are probably functionally redundant; it has been suggested they may cooperate. This chain is RuBisCO accumulation factor 1, found in Picosynechococcus sp. (strain ATCC 27264 / PCC 7002 / PR-6) (Agmenellum quadruplicatum).